The sequence spans 126 residues: Holo-[acyl-carrier-protein] synthase (126 aa).

The Mg(2+) site is built by D8 and E56.

It belongs to the P-Pant transferase superfamily. AcpS family. It depends on Mg(2+) as a cofactor.

It is found in the cytoplasm. The enzyme catalyses apo-[ACP] + CoA = holo-[ACP] + adenosine 3',5'-bisphosphate + H(+). In terms of biological role, transfers the 4'-phosphopantetheine moiety from coenzyme A to a Ser of acyl-carrier-protein. The chain is Holo-[acyl-carrier-protein] synthase from Clostridium tetani (strain Massachusetts / E88).